A 626-amino-acid chain; its full sequence is Lipoprotein LpqB (626 aa).

A signal peptide spans 1–23 (MIGQANRIAAAVSTACLAVLLAG). C24 carries the N-palmitoyl cysteine lipid modification. Residue C24 is the site of S-diacylglycerol cysteine attachment. Residues 428 to 457 (EAEREEDLADDTEPGDTAVGSTERRETDRG) are disordered. Over residues 430-441 (EREEDLADDTEP) the composition is skewed to acidic residues.

This sequence belongs to the LpqB lipoprotein family.

The protein localises to the cell membrane. This Thermobifida fusca (strain YX) protein is Lipoprotein LpqB.